The chain runs to 343 residues: Fructose-1,6-bisphosphatase class 1 (343 aa).

Mg(2+) is bound by residues E99, D121, L123, and D124. Substrate contacts are provided by residues 124-127 (DGSS), N218, Y250, and K283. Residue E289 coordinates Mg(2+).

It belongs to the FBPase class 1 family. Homotetramer. Mg(2+) serves as cofactor.

It is found in the cytoplasm. It catalyses the reaction beta-D-fructose 1,6-bisphosphate + H2O = beta-D-fructose 6-phosphate + phosphate. The protein operates within carbohydrate biosynthesis; gluconeogenesis. In Leptospira biflexa serovar Patoc (strain Patoc 1 / Ames), this protein is Fructose-1,6-bisphosphatase class 1.